Here is a 294-residue protein sequence, read N- to C-terminus: tRNA dimethylallyltransferase (294 aa).

10-17 (GPTAVGKT) provides a ligand contact to ATP. 12–17 (TAVGKT) lines the substrate pocket. The interval 35–38 (DSQQ) is interaction with substrate tRNA.

It belongs to the IPP transferase family. Monomer. The cofactor is Mg(2+).

The catalysed reaction is adenosine(37) in tRNA + dimethylallyl diphosphate = N(6)-dimethylallyladenosine(37) in tRNA + diphosphate. Functionally, catalyzes the transfer of a dimethylallyl group onto the adenine at position 37 in tRNAs that read codons beginning with uridine, leading to the formation of N6-(dimethylallyl)adenosine (i(6)A). This is tRNA dimethylallyltransferase from Streptococcus pneumoniae (strain P1031).